The chain runs to 136 residues: Preprocaerulein type I' (136 aa).

An N-terminal signal peptide occupies residues 1–26 (MFKGILLCVLFAVLSANPLSQPEGFA). A propeptide spanning residues 27–136 (DEERDVRGLA…NALGGAPQQR (110 aa)) is cleaved from the precursor. Positions 82–101 (GAPQQREANDERRFADDEDD) are disordered.

It belongs to the gastrin/cholecystokinin family. In terms of tissue distribution, expressed by the skin glands.

Its subcellular location is the secreted. In terms of biological role, the pharmacological activities of caerulein are quite similar to the physiological activities of gastrin and related peptides. The chain is Preprocaerulein type I' from Xenopus laevis (African clawed frog).